The following is a 461-amino-acid chain: Cysteine--tRNA ligase (461 aa).

Cysteine 28 provides a ligand contact to Zn(2+). The 'HIGH' region signature appears at 30–40; sequence ITIYDLCHIGH. Zn(2+)-binding residues include cysteine 209, histidine 234, and glutamate 238. The 'KMSKS' region signature appears at 266-270; sequence KMSKS. Lysine 269 serves as a coordination point for ATP.

Belongs to the class-I aminoacyl-tRNA synthetase family. Monomer. It depends on Zn(2+) as a cofactor.

The protein localises to the cytoplasm. It catalyses the reaction tRNA(Cys) + L-cysteine + ATP = L-cysteinyl-tRNA(Cys) + AMP + diphosphate. The chain is Cysteine--tRNA ligase from Yersinia pseudotuberculosis serotype O:3 (strain YPIII).